Consider the following 256-residue polypeptide: Pimeloyl-[acyl-carrier protein] methyl ester esterase (256 aa).

One can recognise an AB hydrolase-1 domain in the interval 15-242 (HLVLLHGWGL…AAHAPFISHP (228 aa)). Residues W22, 82 to 83 (SL), and 143 to 147 (FLALQ) each bind substrate. The active-site Nucleophile is the S82. Residues D207 and H235 contribute to the active site. H235 provides a ligand contact to substrate.

The protein belongs to the AB hydrolase superfamily. Carboxylesterase BioH family. In terms of assembly, monomer.

It localises to the cytoplasm. The enzyme catalyses 6-carboxyhexanoyl-[ACP] methyl ester + H2O = 6-carboxyhexanoyl-[ACP] + methanol + H(+). It participates in cofactor biosynthesis; biotin biosynthesis. Its function is as follows. The physiological role of BioH is to remove the methyl group introduced by BioC when the pimeloyl moiety is complete. It allows to synthesize pimeloyl-ACP via the fatty acid synthetic pathway through the hydrolysis of the ester bonds of pimeloyl-ACP esters. This is Pimeloyl-[acyl-carrier protein] methyl ester esterase from Salmonella dublin (strain CT_02021853).